Consider the following 293-residue polypeptide: MLDSIKIRLQYLLPKQGLTRLAGWGADKQAGWLTQLVIKAFARYYKVNMQEAQDPEFSAYRTFNEFFVRPLRAGARPVVAEENLLAQPADGAISQLGTIHDGQILQAKGHDYSVEALLAGNYMLAAEFQNGQFVTTYLAPRDYHRVHMPCDGVLREMIYVPGDLFSVNPLTAANVPNLFARNERVICIFDTTFGPMAQILVGATIVGSIETVWAGTITPPREGVIRRWTYPQAGAEGAITLEKGQEMGRFKLGSTVINLFAEGKVYLAPQLNSGSVTRMGEVLAEAVPVTPPC.

Active-site charge relay system; for autoendoproteolytic cleavage activity residues include D90, H147, and S254. S254 (schiff-base intermediate with substrate; via pyruvic acid; for decarboxylase activity) is an active-site residue. A Pyruvic acid (Ser); by autocatalysis modification is found at S254.

It belongs to the phosphatidylserine decarboxylase family. PSD-B subfamily. Prokaryotic type I sub-subfamily. Heterodimer of a large membrane-associated beta subunit and a small pyruvoyl-containing alpha subunit. It depends on pyruvate as a cofactor. In terms of processing, is synthesized initially as an inactive proenzyme. Formation of the active enzyme involves a self-maturation process in which the active site pyruvoyl group is generated from an internal serine residue via an autocatalytic post-translational modification. Two non-identical subunits are generated from the proenzyme in this reaction, and the pyruvate is formed at the N-terminus of the alpha chain, which is derived from the carboxyl end of the proenzyme. The autoendoproteolytic cleavage occurs by a canonical serine protease mechanism, in which the side chain hydroxyl group of the serine supplies its oxygen atom to form the C-terminus of the beta chain, while the remainder of the serine residue undergoes an oxidative deamination to produce ammonia and the pyruvoyl prosthetic group on the alpha chain. During this reaction, the Ser that is part of the protease active site of the proenzyme becomes the pyruvoyl prosthetic group, which constitutes an essential element of the active site of the mature decarboxylase.

Its subcellular location is the cell membrane. It catalyses the reaction a 1,2-diacyl-sn-glycero-3-phospho-L-serine + H(+) = a 1,2-diacyl-sn-glycero-3-phosphoethanolamine + CO2. The protein operates within phospholipid metabolism; phosphatidylethanolamine biosynthesis; phosphatidylethanolamine from CDP-diacylglycerol: step 2/2. Catalyzes the formation of phosphatidylethanolamine (PtdEtn) from phosphatidylserine (PtdSer). This is Phosphatidylserine decarboxylase proenzyme from Yersinia enterocolitica serotype O:8 / biotype 1B (strain NCTC 13174 / 8081).